The chain runs to 106 residues: Phosphoribosyl-ATP pyrophosphatase (106 aa).

It belongs to the PRA-PH family.

The protein resides in the cytoplasm. The catalysed reaction is 1-(5-phospho-beta-D-ribosyl)-ATP + H2O = 1-(5-phospho-beta-D-ribosyl)-5'-AMP + diphosphate + H(+). The protein operates within amino-acid biosynthesis; L-histidine biosynthesis; L-histidine from 5-phospho-alpha-D-ribose 1-diphosphate: step 2/9. This Limosilactobacillus fermentum (strain NBRC 3956 / LMG 18251) (Lactobacillus fermentum) protein is Phosphoribosyl-ATP pyrophosphatase.